The sequence spans 4545 residues: Prolow-density lipoprotein receptor-related protein 1 (4545 aa).

A signal peptide spans 1-19 (MLTPPLLLLLPLLSALVSG). Residues 20–4424 (ATMDAPKTCS…SQQQPGHMAS (4405 aa)) are Extracellular-facing. LDL-receptor class A domains lie at 26 to 67 (KTCS…ICPQ) and 71 to 111 (QRCP…HCRE). Intrachain disulfides connect Cys28–Cys41, Cys35–Cys54, Cys48–Cys65, Cys73–Cys86, Cys80–Cys99, and Cys93–Cys109. Positions 112-150 (LRANCSRMGCQHHCVPTPSGPTCYCNSSFQLQADGKTCK) constitute an EGF-like 1 domain. An N-linked (GlcNAc...) asparagine glycan is attached at Asn115. 6 disulfides stabilise this stretch: Cys116–Cys125, Cys121–Cys134, Cys136–Cys149, Cys155–Cys165, Cys161–Cys174, and Cys176–Cys189. A glycan (N-linked (GlcNAc...) asparagine) is linked at Asn137. The EGF-like 2; calcium-binding domain maps to 151 to 190 (DFDECSVYGTCSQLCTNTDGSFTCGCVEGYLLQPDNRSCK). Residues Asn186, Asn240, and Asn275 are each glycosylated (N-linked (GlcNAc...) asparagine). LDL-receptor class B repeat units follow at residues 293–335 (GNFY…DPAM), 336–379 (GKVF…DLVS), and 380–423 (RLVY…FENY). Asn358 carries N-linked (GlcNAc...) asparagine glycosylation. Asn447 is a glycosylation site (N-linked (GlcNAc...) asparagine). The region spanning 475 to 521 (RSHACENDQYGKPGGCSDICLLANSHKARTCRCRSGFSLGSDGKSCK) is the EGF-like 3 domain. 3 disulfides stabilise this stretch: Cys479–Cys494, Cys490–Cys505, and Cys507–Cys520. 4 LDL-receptor class B repeats span residues 572-614 (GFIY…DWMG), 615-660 (DNLY…DPLN), 661-711 (GWMY…DIPA), and 712-755 (GRLY…HGNY). Residue Asn730 is glycosylated (N-linked (GlcNAc...) asparagine). Residues 804-844 (GTNKCRVNNGGCSSLCLATPGSRQCACAEDQVLDTDGVTCL) form the EGF-like 4 domain. Cystine bridges form between Cys808–Cys819, Cys815–Cys828, Cys830–Cys843, Cys855–Cys867, Cys862–Cys880, Cys874–Cys891, Cys896–Cys908, Cys903–Cys921, Cys915–Cys932, Cys937–Cys949, Cys944–Cys962, Cys956–Cys972, Cys977–Cys990, Cys985–Cys1003, Cys997–Cys1012, Cys1016–Cys1028, Cys1023–Cys1041, Cys1035–Cys1052, Cys1063–Cys1076, Cys1070–Cys1089, Cys1083–Cys1098, Cys1105–Cys1119, Cys1113–Cys1132, Cys1126–Cys1141, Cys1146–Cys1160, Cys1153–Cys1173, Cys1167–Cys1183, Cys1186–Cys1197, Cys1193–Cys1207, Cys1209–Cys1222, Cys1228–Cys1238, Cys1234–Cys1247, and Cys1249–Cys1262. 8 LDL-receptor class A domains span residues 853–893 (PQCQ…LCHQ), 894–934 (HTCP…TCSA), 935–974 (RTCPPNQFSCASGRCIPISWTCDLDDDCGDRSDESASCAY), 975–1014 (PTCFPLTQFTCNNGRCININWRCDNDNDCGDNSDEAGCSH), 1014–1054 (HSCS…NCTN), 1061–1100 (GGCHSDEFQCRLDGLCIPLRWRCDGDTDCMDSSDEKSCEG), 1103–1143 (HVCD…NCEA), and 1144–1183 (LACRPPSHPCANNTSVCLPPDKLCDGKDDCGDGSDEGELC). Residues Trp872, Asp875, Asp877, Asp879, Asp885, and Glu886 each coordinate Ca(2+). The N-linked (GlcNAc...) asparagine glycan is linked to Asn929. Residues Trp1033, Asp1036, Asp1038, Asp1040, Asp1046, and Glu1047 each coordinate Ca(2+). N-linked (GlcNAc...) asparagine glycosylation is present at Asn1051. Ca(2+) is bound by residues Trp1081, Asp1084, Asp1086, Asp1088, Asp1094, and Glu1095. N-linked (GlcNAc...) asparagine glycosylation is found at Asn1155 and Asn1156. 2 EGF-like domains span residues 1184–1223 (DQCSLNNGGCSHNCSVAPGEGIVCSCPLGMELGSDNHTCQ) and 1224–1263 (IQSYCAKHLKCSQKCDQNKFSVKCSCYEGWVLEPDGESCR). Residues Asn1196 and Asn1219 are each glycosylated (N-linked (GlcNAc...) asparagine). 5 LDL-receptor class B repeats span residues 1310 to 1356 (SALY…DWIA), 1357 to 1399 (GNIY…DPRD), 1400 to 1446 (GILF…DYLE), 1447 to 1491 (KRIL…YGGE), and 1492 to 1532 (VYWT…YHPS). Residue Asn1512 is glycosylated (N-linked (GlcNAc...) asparagine). The EGF-like 7 domain occupies 1537-1580 (APNPCEANGGRGPCSHLCLINYNRTVSCACPHLMKLHKDNTTCY). 3 cysteine pairs are disulfide-bonded: Cys1541–Cys1554, Cys1550–Cys1564, and Cys1566–Cys1579. N-linked (GlcNAc...) asparagine glycosylation is found at Asn1559, Asn1576, Asn1617, and Asn1646. LDL-receptor class B repeat units lie at residues 1628 to 1670 (QRVY…DWVS), 1671 to 1714 (RNLF…HPLR), 1715 to 1754 (GKLYWTDGDNISMANMDGSNHTLLFSGQKGPVGLAIDFPE), and 1755 to 1799 (SKLY…MGDK). N-linked (GlcNAc...) asparagine glycosylation is found at Asn1724, Asn1734, Asn1764, and Asn1826. In terms of domain architecture, EGF-like 8 spans 1847 to 1888 (GTNPCSVNNGDCSQLCLPTSETTRSCMCTAGYSLRSGQQACE). 3 cysteine pairs are disulfide-bonded: Cys1851–Cys1862, Cys1858–Cys1872, and Cys1874–Cys1887. A glycan (N-linked (GlcNAc...) asparagine) is linked at Asn1934. LDL-receptor class B repeat units lie at residues 1935 to 1977 (DTIY…DWIA), 1978 to 2020 (GNIY…HPEK), 2021 to 2064 (GYLF…DYQG), and 2065 to 2108 (GKLY…FEDF). The N-linked (GlcNAc...) asparagine glycan is linked to Asn1996. Lys2010 is subject to N6-acetyllysine. N-linked (GlcNAc...) asparagine glycosylation is present at Asn2049. N-linked (GlcNAc...) asparagine glycosylation is found at Asn2118 and Asn2128. Positions 2156–2196 (GTNVCAVANGGCQQLCLYRGGGQRACACAHGMLAEDGASCR) constitute an EGF-like 9 domain. Intrachain disulfides connect Cys2160/Cys2171, Cys2167/Cys2181, and Cys2183/Cys2195. 5 LDL-receptor class B repeats span residues 2254–2295 (NRIF…HRGW), 2296–2344 (DTLY…DECQ), 2345–2389 (NLMF…DHRA), 2390–2432 (EKLY…YGEH), and 2433–2474 (IFWT…VAND). A glycan (N-linked (GlcNAc...) asparagine) is linked at Asn2473. One can recognise an EGF-like 10 domain in the interval 2479-2519 (ELSPCRINNGGCQDLCLLTHQGHVNCSCRGGRILQEDFTCR). 3 disulfide bridges follow: Cys2483–Cys2494, Cys2490–Cys2504, and Cys2506–Cys2518. A glycan (N-linked (GlcNAc...) asparagine) is linked at Asn2503. Asn2522 carries N-linked (GlcNAc...) asparagine glycosylation. 7 consecutive LDL-receptor class A domains span residues 2523–2564 (SSCR…YCNS), 2565–2603 (RRCKKTFRQCNNGRCVSNMLWCNGVDDCGDGSDEIPCNK), 2604–2642 (TACGVGEFRCRDGSCIGNSSRCNQFVDCEDASDEMNCSA), 2643–2691 (TDCS…DCPG), 2695–2733 (PRCPLNYFACPSGRCIPMSWTCDKEDDCENGEDETHCNK), 2733–2772 (KFCSEAQFECQNHRCISKQWLCDGSDDCGDGSDEAAHCEG), and 2773–2815 (KTCG…GCLY). 6 disulfide bridges follow: Cys2525–Cys2538, Cys2533–Cys2551, Cys2545–Cys2562, Cys2567–Cys2579, Cys2574–Cys2592, and Cys2586–Cys2601. An N-linked (GlcNAc...) asparagine glycan is attached at Asn2602. Cystine bridges form between Cys2606/Cys2618, Cys2613/Cys2631, Cys2625/Cys2640, Cys2645/Cys2667, Cys2661/Cys2680, Cys2674/Cys2689, Cys2697/Cys2709, Cys2704/Cys2722, Cys2716/Cys2731, Cys2735/Cys2747, Cys2742/Cys2760, Cys2754/Cys2770, Cys2775/Cys2788, Cys2782/Cys2801, and Cys2795/Cys2813. 2 N-linked (GlcNAc...) asparagine glycosylation sites follow: Asn2621 and Asn2639. N-linked (GlcNAc...) asparagine glycosylation occurs at Asn2816. LDL-receptor class A domains are found at residues 2817 to 2856 (STCDDREFMCQNRLCIPKHFVCDHDRDCADGSDESPECEY), 2857 to 2900 (PTCG…HCTS), and 2903 to 2941 (HKCNASSQFLCSSGRCVAEALLCNGQDDCGDGSDERGCH). 15 disulfides stabilise this stretch: Cys2819–Cys2831, Cys2826–Cys2844, Cys2838–Cys2854, Cys2859–Cys2871, Cys2866–Cys2885, Cys2879–Cys2898, Cys2905–Cys2918, Cys2913–Cys2931, Cys2925–Cys2940, Cys2945–Cys2957, Cys2953–Cys2966, Cys2968–Cys2981, Cys2987–Cys2997, Cys2993–Cys3006, and Cys3008–Cys3022. Asn2906 carries an N-linked (GlcNAc...) asparagine glycan. In terms of domain architecture, EGF-like 11 spans 2942 to 2982 (VNECLSRKLSGCSQDCEDLKIGFKCRCRPGFRLKDDGRTCA). One can recognise an EGF-like 12; calcium-binding domain in the interval 2983–3023 (DLDECSTTFPCSQLCINTHGSYKCLCVEGYAPRGGDPHSCK). 2 N-linked (GlcNAc...) asparagine glycosylation sites follow: Asn3049 and Asn3090. LDL-receptor class B repeat units lie at residues 3070 to 3114 (QMIY…DWVG), 3115 to 3157 (GNLY…DVQN), 3158 to 3201 (GYLY…DYVT), 3202 to 3244 (ERIY…FEDY), and 3245 to 3285 (VYWT…FHAL). Asn3265 carries N-linked (GlcNAc...) asparagine glycosylation. The region spanning 3291–3332 (PNHPCKVNNGGCSNLCLLSPGGGHKCACPTNFYLGGDGRTCV) is the EGF-like 13 domain. 3 disulfides stabilise this stretch: Cys3295/Cys3306, Cys3302/Cys3316, and Cys3318/Cys3331. LDL-receptor class A domains are found at residues 3333–3372 (SNCTASQFVCKNDKCIPFWWKCDTEDDCGDHSDEPPDCPE), 3373–3411 (FKCRPGQFQCSTGICTNPAFICDGDNDCQDNSDEANCDI), 3412–3451 (HVCLPSQFKCTNTNRCIPGIFRCNGQDNCGDGEDERDCPE), 3452–3492 (VTCA…NCTQ), 3493–3534 (MTCG…ECDE), 3535–3573 (RTCEPYQFRCKNNRCVPGRWQCDYDNDCGDNSDEESCTP), 3574–3612 (RPCSESEFSCANGRCIAGRWKCDGDHDCADGSDEKDCTP), 3612–3650 (PRCDMDQFQCKSGHCIPLRWRCDADADCMDGSDEEACGT), 3653–3693 (RTCP…ECAR), 3694–3734 (FICP…DCEP), and 3740–3779 (PHCKDKKEFLCRNQRCLSSSLRCNMFDDCGDGSDEEDCSI). Asn3334 is a glycosylation site (N-linked (GlcNAc...) asparagine). 39 disulfide bridges follow: Cys3335-Cys3347, Cys3342-Cys3360, Cys3354-Cys3370, Cys3375-Cys3387, Cys3382-Cys3400, Cys3394-Cys3409, Cys3414-Cys3427, Cys3421-Cys3440, Cys3434-Cys3449, Cys3454-Cys3467, Cys3461-Cys3480, Cys3474-Cys3490, Cys3495-Cys3508, Cys3502-Cys3521, Cys3515-Cys3532, Cys3537-Cys3549, Cys3544-Cys3562, Cys3556-Cys3571, Cys3576-Cys3588, Cys3583-Cys3601, Cys3595-Cys3610, Cys3614-Cys3626, Cys3621-Cys3639, Cys3633-Cys3648, Cys3655-Cys3667, Cys3662-Cys3680, Cys3674-Cys3691, Cys3696-Cys3710, Cys3704-Cys3723, Cys3717-Cys3732, Cys3742-Cys3755, Cys3750-Cys3768, Cys3762-Cys3777, Cys3786-Cys3799, Cys3793-Cys3808, Cys3810-Cys3823, Cys3829-Cys3839, Cys3835-Cys3848, and Cys3850-Cys3861. The N-linked (GlcNAc...) asparagine glycan is linked to Asn3489. Asn3663 carries N-linked (GlcNAc...) asparagine glycosylation. EGF-like domains are found at residues 3782 to 3824 (KLTS…PGCQ) and 3825 to 3862 (DINECLRFGTCSQLCNNTKGGHLCSCARNFMKTHNTCK). Residue Asn3789 is glycosylated (N-linked (GlcNAc...) asparagine). Asn3840 is a glycosylation site (N-linked (GlcNAc...) asparagine). 4 LDL-receptor class B repeats span residues 3913-3955 (GRVY…HLNI), 3971-4013 (GNVY…DPLR), 4014-4057 (GTMY…DYHN), and 4058-4102 (ERLY…FEDY). Positions 3941 to 3944 (RHRR) match the Recognition site for proteolytical processing motif. Asn3954 is a glycosylation site (N-linked (GlcNAc...) asparagine). Asn4076 and Asn4126 each carry an N-linked (GlcNAc...) asparagine glycan. 7 consecutive EGF-like domains span residues 4148 to 4184 (VTNPCDRKKCEWLCLLSPSGPVCTCPNGKRLDNGTCV), 4197 to 4233 (RPGTCTLQCFNGGSCFLNARRQPKCRCQPRYTGDKCE), 4233 to 4269 (ELDQCWEYCHNGGTCAASPSGMPTCRCPTGFTGPKCT), 4269 to 4305 (TAQVCAGYCSNNSTCTVNQGNQPQCRCLPGFLGDRCQ), 4305 to 4341 (QYRQCSGFCENFGTCQMAADGSRQCRCTVYFEGPRCE), 4341 to 4376 (EVNKCSRCLQGACVVNKQTGDVTCNCTDGRVAPSCL), and 4374 to 4410 (SCLTCIDHCSNGGSCTMNSKMMPECQCPPHMTGPRCE). 17 disulfide bridges follow: Cys4152–Cys4161, Cys4157–Cys4170, Cys4172–Cys4183, Cys4201–Cys4211, Cys4205–Cys4221, Cys4223–Cys4232, Cys4237–Cys4247, Cys4241–Cys4257, Cys4259–Cys4268, Cys4273–Cys4283, Cys4277–Cys4293, Cys4295–Cys4304, Cys4309–Cys4319, Cys4313–Cys4329, Cys4331–Cys4340, Cys4345–Cys4353, and Cys4348–Cys4364. N-linked (GlcNAc...) asparagine glycosylation occurs at Asn4180. 2 N-linked (GlcNAc...) asparagine glycosylation sites follow: Asn4279 and Asn4280. A glycan (N-linked (GlcNAc...) asparagine) is linked at Asn4365. Cystine bridges form between Cys4366–Cys4375, Cys4378–Cys4388, Cys4382–Cys4398, and Cys4400–Cys4409. The chain crosses the membrane as a helical span at residues 4425–4445 (ILIPLLLLLLLLLVAGVVFWY). At 4446–4545 (KRRVRGAKGF…PEDEIGDPLA (100 aa)) the chain is on the cytoplasmic side. Residues 4446 to 4545 (KRRVRGAKGF…PEDEIGDPLA (100 aa)) are interaction with MAFB. Residue Thr4461 is modified to Phosphothreonine. The NPXY motif motif lies at 4503-4508 (FTNPVY). Tyr4508 carries the phosphotyrosine modification. Phosphoserine occurs at positions 4518, 4521, and 4524.

It belongs to the LDLR family. Heterodimer of an 85-kDa membrane-bound carboxyl subunit and a non-covalently attached 515-kDa N-terminal subunit. Intracellular domain interacts with MAFB. Found in a complex with PID1/PCLI1, LRP1 and CUBNI. Interacts with SNX17, PID1/PCLI1, PDGF and CUBN. The intracellular domain interacts with SHC1, GULP1 and DAB1. Can weakly interact (via NPXY motif) with DAB2 (via PID domain); the interaction is enhanced by tyrosine phosphorylation of the NPXY motif. Interacts with MDK; promotes neuronal survival. Interacts with LRPAP1; this interaction is followed by rapid internalization. Interacts with uPA/PLAU and PAI1/SERPINE1, either individually or in complex with each other, leading to rapid endocytosis; this interaction is abolished in the presence of LRPAP1/RAP. Also interacts with tPA/PLAT alone or in complex with SERPINE1. Interacts with the urokinase receptor PLAUR; this interaction leads to PLAUR internalization and is impaired in the presence of SORL1. Interacts with PDGFB. Interacts with TAU/MAPT, leading to endocytosis; this interaction is reduced in the presence of LRPAP1/RAP. Interacts with IGFBP3. Interacts with ADGRG6. Post-translationally, phosphorylated on serine and threonine residues. Phosphorylated on tyrosine residues upon stimulation with PDGF. Tyrosine phosphorylation promotes interaction with SHC1. In terms of processing, cleaved into a 85 kDa membrane-spanning subunit (LRP-85) and a 515 kDa large extracellular domain (LRP-515) that remains non-covalently associated. Gamma-secretase-dependent cleavage of LRP-85 releases the intracellular domain from the membrane.

The protein resides in the cell membrane. The protein localises to the membrane. Its subcellular location is the coated pit. It is found in the golgi outpost. It localises to the cytoplasm. The protein resides in the cytoskeleton. The protein localises to the microtubule organizing center. Its subcellular location is the nucleus. Functionally, endocytic receptor involved in endocytosis and in phagocytosis of apoptotic cells. Required for early embryonic development. Involved in cellular lipid homeostasis. Involved in the plasma clearance of chylomicron remnants and activated LRPAP1 (alpha 2-macroglobulin), as well as the local metabolism of complexes between plasminogen activators and their endogenous inhibitors. Acts as an alpha-2-macroglobulin receptor. Acts as a TAU/MAPT receptor and controls the endocytosis of TAU/MAPT as well as its subsequent spread. May modulate cellular events, such as APP metabolism, kinase-dependent intracellular signaling, neuronal calcium signaling as well as neurotransmission. Also acts as a receptor for IGFBP3 to mediate cell growth inhibition. In terms of biological role, (Microbial infection) Functions as a receptor for Vibrio cholerae cholix toxin and for Pseudomonas aeruginosa exotoxin A. The sequence is that of Prolow-density lipoprotein receptor-related protein 1 from Mus musculus (Mouse).